The primary structure comprises 202 residues: Putative NAD(P)H nitroreductase YodC (202 aa).

Residues Arg11–Ser13, Gln68–Gln70, Gly155–Gly156, and Arg192 contribute to the FMN site.

This sequence belongs to the nitroreductase family. Requires FMN as cofactor.

Its subcellular location is the cytoplasm. Functionally, putative nitroreductase that may contribute to the degradation of aromatic compounds. This chain is Putative NAD(P)H nitroreductase YodC (yodC), found in Bacillus subtilis (strain 168).